Consider the following 1180-residue polypeptide: IQ domain-containing protein N (1180 aa).

Residues 34–78 (HPPAPAHPSLLDKMEKAPPQPQHEGLKSKEHLPQQPAEGKTASRR) are disordered. One can recognise an IQ 1 domain in the interval 103–132 (HARAATLIQANWRGYWLRQKLISQMMAAKA). Disordered regions lie at residues 283–324 (RVSA…ETPK), 476–496 (MSKTSSQRSPVGVTKPSPQTR), and 786–820 (QRLGGLSAPPWAKPEDRQTQPQPHGHVPGKTTQGG). IQ domains are found at residues 926–955 (RILAVITIQAGVRGYLARRRIRLWHRGAMV), 956–978 (IQATWRGYRVRRNLAHLCRATTT), 979–1001 (IQSAWRGYSTRRDQARHWQMLHP), 1113–1142 (QDKAATAIQSAWRGFKIRQQMRQQQMAAKI), and 1143–1165 (VQATWRGHHTRSCLKNTEALLGP).

In terms of assembly, interacts with calmodulin.

In terms of biological role, essential for spermiogenesis and fertilization. May be required for manchette assembly in elongating spermatids. The polypeptide is IQ domain-containing protein N (Homo sapiens (Human)).